We begin with the raw amino-acid sequence, 227 residues long: UPF0173 metal-dependent hydrolase Cmaq_1073 (227 aa).

Belongs to the UPF0173 family.

The protein is UPF0173 metal-dependent hydrolase Cmaq_1073 of Caldivirga maquilingensis (strain ATCC 700844 / DSM 13496 / JCM 10307 / IC-167).